The primary structure comprises 303 residues: Coenzyme PQQ synthesis protein B (303 aa).

This sequence belongs to the PqqB family.

It functions in the pathway cofactor biosynthesis; pyrroloquinoline quinone biosynthesis. In terms of biological role, may be involved in the transport of PQQ or its precursor to the periplasm. In Pseudomonas entomophila (strain L48), this protein is Coenzyme PQQ synthesis protein B.